The sequence spans 292 residues: 4-hydroxy-tetrahydrodipicolinate synthase (292 aa).

A pyruvate-binding site is contributed by threonine 46. Residue tyrosine 134 is the Proton donor/acceptor of the active site. Lysine 162 acts as the Schiff-base intermediate with substrate in catalysis. A pyruvate-binding site is contributed by isoleucine 204.

This sequence belongs to the DapA family. Homotetramer; dimer of dimers.

The protein resides in the cytoplasm. The enzyme catalyses L-aspartate 4-semialdehyde + pyruvate = (2S,4S)-4-hydroxy-2,3,4,5-tetrahydrodipicolinate + H2O + H(+). It participates in amino-acid biosynthesis; L-lysine biosynthesis via DAP pathway; (S)-tetrahydrodipicolinate from L-aspartate: step 3/4. In terms of biological role, catalyzes the condensation of (S)-aspartate-beta-semialdehyde [(S)-ASA] and pyruvate to 4-hydroxy-tetrahydrodipicolinate (HTPA). The protein is 4-hydroxy-tetrahydrodipicolinate synthase of Moorella thermoacetica (strain ATCC 39073 / JCM 9320).